The chain runs to 246 residues: MNNNTTAPTYTLRGLQLIGWRDMQHALDYLFADGHLKQGTLVAINAEKMLTIEDNAEVRELINAAEFKYADGISVVRSVRKKYPQAQVSRVAGADLWEELMARAGKEGTPVFLVGGKPEVLAQTEAKLRNQWNVNIVGSQDGYFKPEQRQALFERIHASGAQIVTVAMGSPKQEIFMRDCRLVHPDALYMGVGGTYDVFTGHVKRAPKIWQTLGLEWLYRLLSQPSRIKRQLRLLRYLRWHYTGNL.

It belongs to the glycosyltransferase 26 family.

The catalysed reaction is UDP-N-acetyl-alpha-D-mannosaminouronate + N-acetyl-alpha-D-glucosaminyl-di-trans,octa-cis-undecaprenyl diphosphate = beta-D-ManNAcA-(1-&gt;4)-alpha-D-GlcNAc-di-trans,octa-cis-undecaprenyl diphosphate + UDP + H(+). It participates in bacterial outer membrane biogenesis; enterobacterial common antigen biosynthesis. Its function is as follows. Catalyzes the synthesis of Und-PP-GlcNAc-ManNAcA (Lipid II), the second lipid-linked intermediate involved in enterobacterial common antigen (ECA) synthesis. This chain is UDP-N-acetyl-D-mannosaminuronic acid transferase, found in Escherichia coli (strain ATCC 8739 / DSM 1576 / NBRC 3972 / NCIMB 8545 / WDCM 00012 / Crooks).